A 245-amino-acid chain; its full sequence is 1-(5-phosphoribosyl)-5-[(5-phosphoribosylamino)methylideneamino] imidazole-4-carboxamide isomerase (245 aa).

The Proton acceptor role is filled by Asp-11. Asp-132 functions as the Proton donor in the catalytic mechanism.

The protein belongs to the HisA/HisF family.

The protein resides in the cytoplasm. It catalyses the reaction 1-(5-phospho-beta-D-ribosyl)-5-[(5-phospho-beta-D-ribosylamino)methylideneamino]imidazole-4-carboxamide = 5-[(5-phospho-1-deoxy-D-ribulos-1-ylimino)methylamino]-1-(5-phospho-beta-D-ribosyl)imidazole-4-carboxamide. Its pathway is amino-acid biosynthesis; L-histidine biosynthesis; L-histidine from 5-phospho-alpha-D-ribose 1-diphosphate: step 4/9. The sequence is that of 1-(5-phosphoribosyl)-5-[(5-phosphoribosylamino)methylideneamino] imidazole-4-carboxamide isomerase from Bacillus pumilus (strain SAFR-032).